Reading from the N-terminus, the 262-residue chain is Thrombin-like enzyme gyroxin B1.3 (262 aa).

Positions 1–18 (MVLIRVLANLLILQLSYA) are cleaved as a signal peptide. A propeptide spanning residues 19-262 (QKSSELVIGG…AGSETVNCPS (244 aa)) is cleaved from the precursor. The Peptidase S1 domain occupies 25–253 (VIGGDECNIN…HLDWIQNIIA (229 aa)). 6 disulfide bridges follow: C31–C165, C52–C68, C102–C260, C144–C214, C176–C193, and C204–C229. Catalysis depends on H67, which acts as the Charge relay system. Residue N105 is glycosylated (N-linked (GlcNAc...) asparagine). The Charge relay system role is filled by D112. The active-site Charge relay system is S208.

Belongs to the peptidase S1 family. Snake venom subfamily. In terms of assembly, monomer. Expressed by the venom gland.

Its subcellular location is the secreted. Thrombin-like snake venom serine protease. Displays a specificity similar to trypsin. Releases only fibrinopeptide A in the conversion of fibrinogen to fibrin. Reversibly increases the permeability of the blood brain barrier (BBB) in mice. Induces the barrel rotation syndrome in mice, which is manifested by gyroxin-like, rapid rolling motions. This syndrome may be due to its effect on BBB permeability, and certainly also to other actions affecting endogenous substrates present in the endothelium, nervous tissues or blood. Also shows a moderate inhibitory activity on the human voltage-gated potassium channel Kv10.1/KCNH1/EAG1 (58% current inhibition at 5 uM). It blocks Kv10.1/KCNH1/EAG1 in a time and dose-dependent manner and with a mechanism independent of its enzymatic activity. It may have a preference in interacting with Kv10.1/KCNH1/EAG1 in its closed state, since the inhibitory effect of the toxin is decreased at more depolarized potentials. The polypeptide is Thrombin-like enzyme gyroxin B1.3 (Crotalus durissus terrificus (South American rattlesnake)).